The following is a 360-amino-acid chain: Magnesium-protoporphyrin IX monomethyl ester [oxidative] cyclase (360 aa).

This sequence belongs to the AcsF family. Requires Fe cation as cofactor.

The enzyme catalyses Mg-protoporphyrin IX 13-monomethyl ester + 3 NADPH + 3 O2 + 2 H(+) = 3,8-divinyl protochlorophyllide a + 3 NADP(+) + 5 H2O. It functions in the pathway porphyrin-containing compound metabolism; chlorophyll biosynthesis (light-independent). In terms of biological role, catalyzes the formation of the isocyclic ring in chlorophyll biosynthesis. Mediates the cyclase reaction, which results in the formation of divinylprotochlorophyllide (Pchlide) characteristic of all chlorophylls from magnesium-protoporphyrin IX 13-monomethyl ester (MgPMME). In Synechococcus sp. (strain WH7803), this protein is Magnesium-protoporphyrin IX monomethyl ester [oxidative] cyclase.